The following is a 345-amino-acid chain: HTH-type transcriptional regulator reg1 (345 aa).

The region spanning 1–58 (MTTRLADIAAQAGVSEATVSRVLNGKPGVAATTRQSVLAALDVLGYERPVRLRRRSAG) is the HTH lacI-type domain. A DNA-binding region (H-T-H motif) is located at residues 5 to 24 (LADIAAQAGVSEATVSRVLN).

Functionally, transcription repressor involved in control of expression of alpha-amylase and chitinase genes and of actinorhodin production. In Streptomyces lividans, this protein is HTH-type transcriptional regulator reg1 (reg1).